Reading from the N-terminus, the 132-residue chain is Translation initiation factor 5A (132 aa).

Residue Lys-36 is modified to Hypusine.

This sequence belongs to the eIF-5A family.

The protein resides in the cytoplasm. In terms of biological role, functions by promoting the formation of the first peptide bond. The protein is Translation initiation factor 5A (eIF5A) of Pyrobaculum islandicum (strain DSM 4184 / JCM 9189 / GEO3).